The chain runs to 341 residues: KH domain-containing RNA-binding protein qki.S (341 aa).

The KH domain occupies Tyr88–Val154. The Nuclear localization signal signature appears at Arg324–Arg330.

The protein belongs to the quaking family. In terms of assembly, homodimer; does not require RNA to homodimerize.

Its subcellular location is the nucleus. It is found in the cytoplasm. Its function is as follows. RNA reader protein, which recognizes and binds specific RNAs, thereby regulating RNA metabolic processes, such as pre-mRNA splicing, circular RNA (circRNA) formation, mRNA export, mRNA stability and/or translation. Involved in various cellular processes, such as mRNA storage into stress granules, apoptosis, interferon response, glial cell fate and development. Binds to the 5'-NACUAAY-N(1,20)-UAAY-3' RNA core sequence. Acts as a mRNA modification reader that specifically recognizes and binds mRNA transcripts modified by internal N(7)-methylguanine (m7G). Promotes the formation of circular RNAs (circRNAs): acts by binding to sites flanking circRNA-forming exons. CircRNAs are produced by back-splicing circularization of pre-mRNAs. Required to protect and promote stability of mRNAs which promotes oligodendrocyte differentiation. Acts as an important regulator of muscle development. Essential for notochord development. This Xenopus laevis (African clawed frog) protein is KH domain-containing RNA-binding protein qki.S.